The primary structure comprises 122 residues: MARIAGVNIPTAKRVVIALTYIHGIGPKFAQEIMDKVGIPAEKRVHQLTDAEVLQIREAIDRDYQVEGDLRRETSMNIKRLMDLGCYRGLRHRRGLPVRGQRTHTNARTRKGPAKAIAGKKK.

The segment at Arg99–Lys122 is disordered.

It belongs to the universal ribosomal protein uS13 family. As to quaternary structure, part of the 30S ribosomal subunit. Forms a loose heterodimer with protein S19. Forms two bridges to the 50S subunit in the 70S ribosome.

In terms of biological role, located at the top of the head of the 30S subunit, it contacts several helices of the 16S rRNA. In the 70S ribosome it contacts the 23S rRNA (bridge B1a) and protein L5 of the 50S subunit (bridge B1b), connecting the 2 subunits; these bridges are implicated in subunit movement. Contacts the tRNAs in the A and P-sites. In Agrobacterium fabrum (strain C58 / ATCC 33970) (Agrobacterium tumefaciens (strain C58)), this protein is Small ribosomal subunit protein uS13.